Consider the following 88-residue polypeptide: MANSKSAKKRALQSEKRRQHNASRRSMLRTYVKKVIAAIKAGDHKTAAEAFAVAQPIVDRMATKGLIHKNKAARQKARLNAKIKAIAA.

The tract at residues 1–27 (MANSKSAKKRALQSEKRRQHNASRRSM) is disordered.

Belongs to the bacterial ribosomal protein bS20 family.

Its function is as follows. Binds directly to 16S ribosomal RNA. In Shewanella baltica (strain OS223), this protein is Small ribosomal subunit protein bS20.